The chain runs to 637 residues: tRNA 5-methylaminomethyl-2-thiouridine biosynthesis bifunctional protein MnmC (637 aa).

The tract at residues 1-20 (MSERIEWLEDGTAGGSPYSP) is disordered. The interval 1–232 (MSERIEWLED…KRDNLQGEYQ (232 aa)) is tRNA (mnm(5)s(2)U34)-methyltransferase. The tract at residues 255–637 (IGAGLAGSAV…YATRLQPSGS (383 aa)) is FAD-dependent cmnm(5)s(2)U34 oxidoreductase.

The protein in the N-terminal section; belongs to the methyltransferase superfamily. tRNA (mnm(5)s(2)U34)-methyltransferase family. This sequence in the C-terminal section; belongs to the DAO family. It depends on FAD as a cofactor.

The protein localises to the cytoplasm. The catalysed reaction is 5-aminomethyl-2-thiouridine(34) in tRNA + S-adenosyl-L-methionine = 5-methylaminomethyl-2-thiouridine(34) in tRNA + S-adenosyl-L-homocysteine + H(+). In terms of biological role, catalyzes the last two steps in the biosynthesis of 5-methylaminomethyl-2-thiouridine (mnm(5)s(2)U) at the wobble position (U34) in tRNA. Catalyzes the FAD-dependent demodification of cmnm(5)s(2)U34 to nm(5)s(2)U34, followed by the transfer of a methyl group from S-adenosyl-L-methionine to nm(5)s(2)U34, to form mnm(5)s(2)U34. In Polaromonas naphthalenivorans (strain CJ2), this protein is tRNA 5-methylaminomethyl-2-thiouridine biosynthesis bifunctional protein MnmC.